A 1035-amino-acid chain; its full sequence is MSGSYPFIDIAALDSVREGFARGDAQLVLAHDLSTVLWVNGPGAKLFGYNRVEDLIEGQLDLPVATRRQIAAFSSENTSAPSAVAVRLGGGLRSELTHLHVSNIKLPDGVAALLVATQMPDNSAEAAISGLGDDSTHIALVDAVGKVVAASPRFALLDISASTLEDLIVEAGDATDRIVKRRIRTGSHSVPGAIARLTDTPALHLLCIVGDAPAQFQTAAEAVPLPDNAEAVLEEILPEQGDAPAQQAQKTHAEQPRPKTFAFDHDAPPARFIWKVGPDGTFSEISPDLAAVVGPNSADIVGRRFSDVANVFGFYTDGSIAALLLERDTWSGKRLLWPVEGTRLRVPVELAALPVYSRDREFLGFRGFGIVRPAEAEADPEEIGLALAGGIPQNRKPRKEPAETARMVGEDDVLALSEEVANDDQPAAVLPKPPLDITPTPGRRDSDKVISLLNSCAQEKVAADQAKFLKEKERATRPEGGLTKTERNAFREIAERLRKQGLANTRAESETPVSETSSIEPVEPTPPVKTRSEPIQPDETALLANLPVPVIIHSGDAIHYVNQALLDITGYESLDDIRSAGGVDVLFNSESDDGETRQSMVLRHADGSEEPVDAHLNAIAWRGGRALMLSLMPVTAADLPAPAELPAANDEEKQALEAHVEELKTILDTATDGVVLIDPEGRIRSMNHSASALFGYERDEAEGKFFSMLFAIESQRAAMDYLHGLSGNGVLSVLNDGREVIGREAKGGFIPLFMTIGKLPHTRGFCAVLRDITQWKRTEEELTNARKEAERASNQKTEFLARISHEIRTPLNAIIGFSELMADEKFGPIGNDRYRDYLRDINRSGNHVLALVNDLLDISKIEAGALDMQFEAVSLNDAIGEAIALMQPQANRERVIIRSSFQSNLPDIVADSRSIKQVALNLLSNAVRFTAPGGQVIVSTSYELNGDVVMRVRDTGIGMSKSEVEQALKPFRQINALEGRKAESAKDWRNEGTGLGLPLTKAMVEANRAQFAIDSNPGQGTVVEIVFPPTRVLAD.

The tract at residues 1–613 (MSGSYPFIDI…HADGSEEPVD (613 aa)) is important for polar localization. The disordered stretch occupies residues 500–533 (QGLANTRAESETPVSETSSIEPVEPTPPVKTRSE). The interaction with DivK stretch occupies residues 614–1035 (AHLNAIAWRG…VFPPTRVLAD (422 aa)). In terms of domain architecture, PAS spans 659-730 (HVEELKTILD…YLHGLSGNGV (72 aa)). The Histidine kinase domain maps to 802-1031 (RISHEIRTPL…VVEIVFPPTR (230 aa)). His805 carries the phosphohistidine; by autocatalysis modification.

Interacts with DivK.

The protein localises to the cytoplasm. It catalyses the reaction ATP + protein L-histidine = ADP + protein N-phospho-L-histidine.. Functionally, functions as a polar differentiation marker. Essential protein that, by localizing in the old pole of dividing cells, controls cell division and maturation, probably through control of DivK phosphorylation status and cellular distribution, which in turn regulates CtrA, a transcriptional regulator of the minB operon. The asymmetrical localization of this protein is probably required for cells to enter a new division cycle. The chain is Cell-division control histidine kinase PdhS (pdhS) from Brucella suis biovar 1 (strain 1330).